A 383-amino-acid chain; its full sequence is tRNA(Met) cytidine acetate ligase (383 aa).

ATP is bound by residues 7–20, Gly101, Asn153, and 178–179; these read IAEF…HEFL and RI.

This sequence belongs to the TmcAL family.

It is found in the cytoplasm. The catalysed reaction is cytidine(34) in elongator tRNA(Met) + acetate + ATP = N(4)-acetylcytidine(34) in elongator tRNA(Met) + AMP + diphosphate. In terms of biological role, catalyzes the formation of N(4)-acetylcytidine (ac(4)C) at the wobble position of elongator tRNA(Met), using acetate and ATP as substrates. First activates an acetate ion to form acetyladenylate (Ac-AMP) and then transfers the acetyl group to tRNA to form ac(4)C34. In Lactobacillus acidophilus (strain ATCC 700396 / NCK56 / N2 / NCFM), this protein is tRNA(Met) cytidine acetate ligase.